A 440-amino-acid chain; its full sequence is Chromosome partition protein MukF (440 aa).

The segment at L208 to I236 is leucine-zipper.

It belongs to the MukF family. Interacts, and probably forms a ternary complex, with MukE and MukB via its C-terminal region. The complex formation is stimulated by calcium or magnesium. It is required for an interaction between MukE and MukB.

The protein resides in the cytoplasm. It localises to the nucleoid. In terms of biological role, involved in chromosome condensation, segregation and cell cycle progression. May participate in facilitating chromosome segregation by condensation DNA from both sides of a centrally located replisome during cell division. Not required for mini-F plasmid partitioning. Probably acts via its interaction with MukB and MukE. Overexpression results in anucleate cells. It has a calcium binding activity. In Yersinia enterocolitica serotype O:8 / biotype 1B (strain NCTC 13174 / 8081), this protein is Chromosome partition protein MukF.